The sequence spans 201 residues: Large ribosomal subunit protein uL4 (201 aa).

Residues 44-71 (RAQKTRAEVTGSGKKPWRQKGTGRARSG) are disordered.

The protein belongs to the universal ribosomal protein uL4 family. In terms of assembly, part of the 50S ribosomal subunit.

In terms of biological role, one of the primary rRNA binding proteins, this protein initially binds near the 5'-end of the 23S rRNA. It is important during the early stages of 50S assembly. It makes multiple contacts with different domains of the 23S rRNA in the assembled 50S subunit and ribosome. Its function is as follows. Forms part of the polypeptide exit tunnel. The chain is Large ribosomal subunit protein uL4 from Shigella flexneri serotype 5b (strain 8401).